The chain runs to 87 residues: Small ribosomal subunit protein uS15 (87 aa).

It belongs to the universal ribosomal protein uS15 family. Part of the 30S ribosomal subunit. Forms a bridge to the 50S subunit in the 70S ribosome, contacting the 23S rRNA.

Functionally, one of the primary rRNA binding proteins, it binds directly to 16S rRNA where it helps nucleate assembly of the platform of the 30S subunit by binding and bridging several RNA helices of the 16S rRNA. Forms an intersubunit bridge (bridge B4) with the 23S rRNA of the 50S subunit in the ribosome. This chain is Small ribosomal subunit protein uS15, found in Clostridium perfringens (strain ATCC 13124 / DSM 756 / JCM 1290 / NCIMB 6125 / NCTC 8237 / Type A).